The sequence spans 145 residues: D-aminoacyl-tRNA deacylase (145 aa).

The Gly-cisPro motif, important for rejection of L-amino acids signature appears at 137–138 (GP).

The protein belongs to the DTD family. As to quaternary structure, homodimer.

It is found in the cytoplasm. It carries out the reaction glycyl-tRNA(Ala) + H2O = tRNA(Ala) + glycine + H(+). The catalysed reaction is a D-aminoacyl-tRNA + H2O = a tRNA + a D-alpha-amino acid + H(+). Functionally, an aminoacyl-tRNA editing enzyme that deacylates mischarged D-aminoacyl-tRNAs. Also deacylates mischarged glycyl-tRNA(Ala), protecting cells against glycine mischarging by AlaRS. Acts via tRNA-based rather than protein-based catalysis; rejects L-amino acids rather than detecting D-amino acids in the active site. By recycling D-aminoacyl-tRNA to D-amino acids and free tRNA molecules, this enzyme counteracts the toxicity associated with the formation of D-aminoacyl-tRNA entities in vivo and helps enforce protein L-homochirality. This Cronobacter sakazakii (strain ATCC BAA-894) (Enterobacter sakazakii) protein is D-aminoacyl-tRNA deacylase.